We begin with the raw amino-acid sequence, 117 residues long: Large ribosomal subunit protein eL34 (117 aa).

The residue at position 12 (S12) is a Phosphoserine. A compositionally biased stretch (polar residues) spans 16 to 28 (ASNKTRLSRTPGQ). The interval 16-35 (ASNKTRLSRTPGQQDRLPLH) is disordered. K108 is covalently cross-linked (Glycyl lysine isopeptide (Lys-Gly) (interchain with G-Cter in SUMO2)).

This sequence belongs to the eukaryotic ribosomal protein eL34 family. Component of the large ribosomal subunit.

Its subcellular location is the cytoplasm. It is found in the cytosol. The protein resides in the endoplasmic reticulum. In terms of biological role, component of the large ribosomal subunit. The ribosome is a large ribonucleoprotein complex responsible for the synthesis of proteins in the cell. This Vicugna pacos (Alpaca) protein is Large ribosomal subunit protein eL34 (RPL34).